We begin with the raw amino-acid sequence, 68 residues long: Large ribosomal subunit protein uL29 (68 aa).

This sequence belongs to the universal ribosomal protein uL29 family.

The sequence is that of Large ribosomal subunit protein uL29 from Nitrobacter winogradskyi (strain ATCC 25391 / DSM 10237 / CIP 104748 / NCIMB 11846 / Nb-255).